Consider the following 60-residue polypeptide: uncharacterized protein (60 aa).

This is an uncharacterized protein from Methanocaldococcus jannaschii (strain ATCC 43067 / DSM 2661 / JAL-1 / JCM 10045 / NBRC 100440) (Methanococcus jannaschii).